The following is a 1215-amino-acid chain: von Willebrand factor A domain-containing protein 5B1 (1215 aa).

The first 18 residues, 1 to 18 (MPGLLNCLTGAALPLMES), serve as a signal peptide directing secretion. The region spanning 19–141 (DVTSYVSGYA…NVTVFISTSS (123 aa)) is the VIT domain. N-linked (GlcNAc...) asparagine glycosylation occurs at Asn132. The 180-residue stretch at 353–532 (EFIFLIDRSN…KAMAPVLSDV (180 aa)) folds into the VWFA domain. Positions 595-674 (SVFYPSQDEG…DPTGTARRYP (80 aa)) are disordered. 2 stretches are compositionally biased toward polar residues: residues 608 to 621 (GSGNCAKNVNQGQT) and 646 to 667 (YSTNQISSHKTCPRATTASDPT). Residue Tyr879 is modified to Phosphotyrosine. 3 disordered regions span residues 934 to 953 (GSSAGLGRPQSMLREHSSAA), 964 to 999 (QDSPTSTFNKTPSPGHEKQTTAEGPPQNLSASAPSS), and 1100 to 1121 (SPQDCTSLSSSPPSCDGISLKS). 3 stretches are compositionally biased toward polar residues: residues 964–975 (QDSPTSTFNKTP), 990–999 (QNLSASAPSS), and 1100–1112 (SPQDCTSLSSSPP).

The protein resides in the secreted. The polypeptide is von Willebrand factor A domain-containing protein 5B1 (Vwa5b1) (Mus musculus (Mouse)).